The chain runs to 520 residues: MKSFSLLASAGLATLASLPLTMAGVITPSYFDKHPLSRRQLSDAQVQRELGPQLSRGATIIGPGGPGWDDAIERFDNESRPTIRLVVVPAVESDIATVVKLANRFGIPFLVKNRGHALTNTIGRFRGIQIDMSRLTTITIQPGEPAESAWFQGGAWDKQAIEYLWDRGYVTVTGSCDCVGMMGPGLGGGHGRYQGLYGLISDNLINMNVVLADGSAVRVNATSNPDLWWGMQGAGHNLGIVTSFQSKIYPRKIDTWHYHSYTYTQDKLEAVFGALNTFHGNGDGSTPVLMGLNTGGFYIDPSVSQTEPVVSWVFGYAGPASEAEALLEPFSRLGPAAEQSGDVPYPGVATAMGTGQDQPLCQPGDAHVQVTSQFNVYNATAERALYQLFNRTIAAHPQLADSVAFHEGYSTAAVDRADPSASAVAFRDRKLLMFFDARLKPADAADPEVLGMAREFGRQVRRIWNEGAPDLKPATYVNYAAGDEPLESMYGYDAARLRRLRNIKRKYDPHGRFVYYNPIA.

The signal sequence occupies residues Met-1–Ala-23. Residues Asn-77, Asn-220, Asn-378, and Asn-390 are each glycosylated (N-linked (GlcNAc...) asparagine). Residues Ser-79 to Arg-251 form the FAD-binding PCMH-type domain.

Belongs to the oxygen-dependent FAD-linked oxidoreductase family. Requires FAD as cofactor.

It functions in the pathway polyketide biosynthesis. In terms of biological role, FAD-linked oxidoreductase; part of the gene cluster that mediates the biosynthesis of pyriculol and pyriculariol, two heptaketides that induce lesion formation upon application on rice leaves but are dispensable for pathogenicity. The highly reducing polyketide synthase synthesizes the heptaketide backbone of pyriculol and pyriculariol. Pyriculol and pyriculariol contain several hydroxyl moieties and double bonds, so it can be assumed that several reduction steps occur during biosynthesis. These reactions could be executed by PKS19 itself or partly by the tailoring enzymes OXR1, OXR2, RED1, RED2 or RED3, identified within the cluster. The FAD-linked oxidoreductase OXR1 is the only tailoring enzyme for which the function has been determined yet, and is involved in the oxidation of dihydropyriculol and dihydropyriculariol into pyriculol and pyriculariol, respectively. This Pyricularia oryzae (strain 70-15 / ATCC MYA-4617 / FGSC 8958) (Rice blast fungus) protein is FAD-linked oxidoreductase OXR2.